We begin with the raw amino-acid sequence, 155 residues long: Ribosomal RNA large subunit methyltransferase H (155 aa).

Residues L73, G104, and 123-128 contribute to the S-adenosyl-L-methionine site; that span reads LSPLTL.

The protein belongs to the RNA methyltransferase RlmH family. As to quaternary structure, homodimer.

The protein resides in the cytoplasm. The enzyme catalyses pseudouridine(1915) in 23S rRNA + S-adenosyl-L-methionine = N(3)-methylpseudouridine(1915) in 23S rRNA + S-adenosyl-L-homocysteine + H(+). Its function is as follows. Specifically methylates the pseudouridine at position 1915 (m3Psi1915) in 23S rRNA. This chain is Ribosomal RNA large subunit methyltransferase H, found in Pseudomonas fluorescens (strain ATCC BAA-477 / NRRL B-23932 / Pf-5).